The chain runs to 379 residues: Dual-specificity RNA methyltransferase RlmN (379 aa).

The Proton acceptor role is filled by E90. The region spanning 96-348 (EPNRGTLCVS…TTVRKTRGDD (253 aa)) is the Radical SAM core domain. A disulfide bridge connects residues C103 and C353. C110, C114, and C117 together coordinate [4Fe-4S] cluster. S-adenosyl-L-methionine is bound by residues 179–180 (GE), S211, 233–235 (SLH), and N310. The active-site S-methylcysteine intermediate is C353.

Belongs to the radical SAM superfamily. RlmN family. [4Fe-4S] cluster serves as cofactor.

Its subcellular location is the cytoplasm. It catalyses the reaction adenosine(2503) in 23S rRNA + 2 reduced [2Fe-2S]-[ferredoxin] + 2 S-adenosyl-L-methionine = 2-methyladenosine(2503) in 23S rRNA + 5'-deoxyadenosine + L-methionine + 2 oxidized [2Fe-2S]-[ferredoxin] + S-adenosyl-L-homocysteine. The catalysed reaction is adenosine(37) in tRNA + 2 reduced [2Fe-2S]-[ferredoxin] + 2 S-adenosyl-L-methionine = 2-methyladenosine(37) in tRNA + 5'-deoxyadenosine + L-methionine + 2 oxidized [2Fe-2S]-[ferredoxin] + S-adenosyl-L-homocysteine. Its function is as follows. Specifically methylates position 2 of adenine 2503 in 23S rRNA and position 2 of adenine 37 in tRNAs. m2A2503 modification seems to play a crucial role in the proofreading step occurring at the peptidyl transferase center and thus would serve to optimize ribosomal fidelity. This is Dual-specificity RNA methyltransferase RlmN from Nitrosomonas eutropha (strain DSM 101675 / C91 / Nm57).